The following is a 1365-amino-acid chain: Glucosyltransferase-S (1365 aa).

The or 37 signal peptide spans 1-36 (MEKNLRYKLHKVKKQWVAIGVTTVTLSFLAGGQVVA). Polar residues-rich tracts occupy residues 80–89 (DQTATSQVSP) and 127–146 (RQSA…TSDQ). Disordered regions lie at residues 80–99 (DQTA…DNQV) and 127–152 (RQSA…HLET). Cell wall-binding repeat units follow at residues 146-166 (QPGH…NGQR) and 168-187 (KNYS…QTGE). Residues 200-1000 (QDNVPDSYQA…KPIDPSVKIT (801 aa)) form a catalytic; approximate region. Cell wall-binding repeat units lie at residues 1052-1071 (ANGF…NGQE), 1073-1092 (KNRF…DGKM), 1093-1112 (ATGK…NGKQ), 1113-1133 (LKEG…NGRT), 1136-1159 (NKGF…DGTI), 1160-1179 (AIGL…YGYQ), 1234-1253 (LTGE…NGVQ), 1278-1298 (GKGW…SGQV), 1299-1318 (LTGL…KGIQ), and 1343-1362 (RDRW…NGLA).

The protein belongs to the glycosyl hydrolase 70 family.

The catalysed reaction is [(1-&gt;6)-alpha-D-glucosyl](n) + sucrose = [(1-&gt;6)-alpha-D-glucosyl](n+1) + D-fructose. With respect to regulation, glucan synthesis by GTF-S is independent of primer glucan unlike GTF-I. Production of extracellular glucans, that are thought to play a key role in the development of the dental plaque because of their ability to adhere to smooth surfaces and mediate the aggregation of bacterial cells and food debris. The chain is Glucosyltransferase-S (gtfS) from Streptococcus downei (Streptococcus sobrinus).